The primary structure comprises 157 residues: Small ribosomal subunit protein uS7 (157 aa).

This sequence belongs to the universal ribosomal protein uS7 family. In terms of assembly, part of the 30S ribosomal subunit. Contacts proteins S9 and S11.

One of the primary rRNA binding proteins, it binds directly to 16S rRNA where it nucleates assembly of the head domain of the 30S subunit. Is located at the subunit interface close to the decoding center, probably blocks exit of the E-site tRNA. The sequence is that of Small ribosomal subunit protein uS7 from Leptospira biflexa serovar Patoc (strain Patoc 1 / Ames).